A 364-amino-acid polypeptide reads, in one-letter code: Alanine racemase (364 aa).

Lys34 functions as the Proton acceptor; specific for D-alanine in the catalytic mechanism. Lys34 is subject to N6-(pyridoxal phosphate)lysine. Arg129 contacts substrate. The active-site Proton acceptor; specific for L-alanine is the Tyr259. Residue Met307 participates in substrate binding.

Belongs to the alanine racemase family. The cofactor is pyridoxal 5'-phosphate.

The enzyme catalyses L-alanine = D-alanine. It functions in the pathway amino-acid biosynthesis; D-alanine biosynthesis; D-alanine from L-alanine: step 1/1. Functionally, catalyzes the interconversion of L-alanine and D-alanine. May also act on other amino acids. The chain is Alanine racemase (alr) from Coxiella burnetii (strain CbuK_Q154) (Coxiella burnetii (strain Q154)).